The following is a 161-amino-acid chain: Regulator of ribonuclease activity A (161 aa).

Belongs to the RraA family. In terms of assembly, homotrimer. Binds to both RNA-binding sites in the C-terminal region of Rne and to RhlB.

It localises to the cytoplasm. Functionally, globally modulates RNA abundance by binding to RNase E (Rne) and regulating its endonucleolytic activity. Can modulate Rne action in a substrate-dependent manner by altering the composition of the degradosome. Modulates RNA-binding and helicase activities of the degradosome. In Salmonella choleraesuis (strain SC-B67), this protein is Regulator of ribonuclease activity A.